Consider the following 98-residue polypeptide: Large ribosomal subunit protein uL23 (98 aa).

This sequence belongs to the universal ribosomal protein uL23 family. In terms of assembly, part of the 50S ribosomal subunit. Contacts protein L29, and trigger factor when it is bound to the ribosome.

Functionally, one of the early assembly proteins it binds 23S rRNA. One of the proteins that surrounds the polypeptide exit tunnel on the outside of the ribosome. Forms the main docking site for trigger factor binding to the ribosome. In Rickettsia felis (strain ATCC VR-1525 / URRWXCal2) (Rickettsia azadi), this protein is Large ribosomal subunit protein uL23.